The following is a 694-amino-acid chain: Elongation factor G (694 aa).

Residues 9 to 288 form the tr-type G domain; sequence DAIRNIGIMA…VIVKWLPSPL (280 aa). GTP is bound by residues 18-25, 82-86, and 136-139; these read AHIDAGKT, DTPGH, and NKMD.

This sequence belongs to the TRAFAC class translation factor GTPase superfamily. Classic translation factor GTPase family. EF-G/EF-2 subfamily.

It localises to the cytoplasm. In terms of biological role, catalyzes the GTP-dependent ribosomal translocation step during translation elongation. During this step, the ribosome changes from the pre-translocational (PRE) to the post-translocational (POST) state as the newly formed A-site-bound peptidyl-tRNA and P-site-bound deacylated tRNA move to the P and E sites, respectively. Catalyzes the coordinated movement of the two tRNA molecules, the mRNA and conformational changes in the ribosome. This chain is Elongation factor G, found in Chlamydia trachomatis serovar A (strain ATCC VR-571B / DSM 19440 / HAR-13).